We begin with the raw amino-acid sequence, 668 residues long: MSIEQTLDELKQQLNYHAYRYYVEDSPELPDAEYDRMMQELLSIESEHPELVTVDSPSQRVGGEALDGFTQIQHEIPMLSLDNAFSDEELEAFEKRMNDRLISKPVSLFCCEPKLDGLAVSLLYVNGKLVQAGTRGDGTTGENITENVRTIRCIPLTLQGEGWPTRLEVRGEVFMPKAGFEALNERALKRGEKPFANPRNAAAGSLRQLDSKITATRPLSFYAYSVGVIEGGELETSHYQRFVQLKSWGLPMCEETKQCYSLTEVKAYYKDILKRRDALKYEIDGVVIKVDDIALQEQLGFVARAPRWAIAYKFPAQEELTVLNDVEFQVGRTGAITPVAKLEPVFVGGVTVSNATLHNADEIARLGVHIGDTVIIRRAGDVIPQIVSVVEARRPTDSKAIVYPTHCPVCGSNLERVEGEAVTRCGAGLVCQAQRKEALKHFVSRKALDVDGLGDKVVEQLVDKEMVETPADLFKLSAGVLTVLERMGPKSAQNVVDALNKAKATTLPRFLYSLGIREVGEATAANLAAHFYTLEAIQVATFEQLIEVSDVGDIVAKHVLNFFAEPHNKTVIDDLQEMGIHWPEIKALDESVPQPLAGKVVVLTGTLHKLKRNEAKAALQELGAKVTGSVSKKTDILFAGEAAGSKLAKAEELGVEVMNEEQLIELLN.

NAD(+) is bound by residues 31-35, 80-81, and Glu112; these read DAEYD and SL. The active-site N6-AMP-lysine intermediate is Lys114. The NAD(+) site is built by Arg135, Glu172, Lys289, and Lys313. 4 residues coordinate Zn(2+): Cys407, Cys410, Cys425, and Cys431. The BRCT domain maps to 591 to 668; sequence SVPQPLAGKV…NEEQLIELLN (78 aa).

Belongs to the NAD-dependent DNA ligase family. LigA subfamily. It depends on Mg(2+) as a cofactor. Mn(2+) serves as cofactor.

It carries out the reaction NAD(+) + (deoxyribonucleotide)n-3'-hydroxyl + 5'-phospho-(deoxyribonucleotide)m = (deoxyribonucleotide)n+m + AMP + beta-nicotinamide D-nucleotide.. Its function is as follows. DNA ligase that catalyzes the formation of phosphodiester linkages between 5'-phosphoryl and 3'-hydroxyl groups in double-stranded DNA using NAD as a coenzyme and as the energy source for the reaction. It is essential for DNA replication and repair of damaged DNA. This is DNA ligase from Aliivibrio fischeri (strain MJ11) (Vibrio fischeri).